The primary structure comprises 213 residues: Protein-L-isoaspartate O-methyltransferase (213 aa).

Ser62 is a catalytic residue.

The protein belongs to the methyltransferase superfamily. L-isoaspartyl/D-aspartyl protein methyltransferase family.

The protein resides in the cytoplasm. The enzyme catalyses [protein]-L-isoaspartate + S-adenosyl-L-methionine = [protein]-L-isoaspartate alpha-methyl ester + S-adenosyl-L-homocysteine. Its function is as follows. Catalyzes the methyl esterification of L-isoaspartyl residues in peptides and proteins that result from spontaneous decomposition of normal L-aspartyl and L-asparaginyl residues. It plays a role in the repair and/or degradation of damaged proteins. The chain is Protein-L-isoaspartate O-methyltransferase from Desulfovibrio desulfuricans (strain ATCC 27774 / DSM 6949 / MB).